The primary structure comprises 424 residues: MAKIVVTGGQALHGEVHISGAKNAVLPILCATLLADAPVEISNVPHLHDVITTVKLLSELGAEVTIDEGTLAKGRSILVDPRSVTHQIAPYELVKTMRASILVLGPLLARYGTAEVSLPGGCAIGSRPVDQHIKGLQALGADISVENGYIKATSNGRLKGGRYVFDMVSVTGTENVLMAAVLAEGTTVLENAAMEPEVTDLADCLIALGAQIEGAGTPRITVQGVERLGGGHHAVLPDRIETGTFLVAAAMTGGSVTVRRARPDTLDAVLDKLTEAGATITTTADSVTLDMHGKRPRAVNLTTAPYPAFPTDMQAQFMALNCVADGVGVINETIFENRFMHVNELLRLGADIQVEGHTAIVRGAERLSGAPVMATDLRASASLILAGLVADGDTTIDRIYHLDRGYENIEEKLGALGATIRRIA.

22 to 23 is a binding site for phosphoenolpyruvate; it reads KN. UDP-N-acetyl-alpha-D-glucosamine is bound at residue R98. C122 functions as the Proton donor in the catalytic mechanism. A 2-(S-cysteinyl)pyruvic acid O-phosphothioketal modification is found at C122. UDP-N-acetyl-alpha-D-glucosamine is bound by residues 127-131, D312, and I334; that span reads RPVDQ.

This sequence belongs to the EPSP synthase family. MurA subfamily.

It is found in the cytoplasm. The catalysed reaction is phosphoenolpyruvate + UDP-N-acetyl-alpha-D-glucosamine = UDP-N-acetyl-3-O-(1-carboxyvinyl)-alpha-D-glucosamine + phosphate. The protein operates within cell wall biogenesis; peptidoglycan biosynthesis. Functionally, cell wall formation. Adds enolpyruvyl to UDP-N-acetylglucosamine. This chain is UDP-N-acetylglucosamine 1-carboxyvinyltransferase, found in Xanthomonas campestris pv. campestris (strain 8004).